A 216-amino-acid polypeptide reads, in one-letter code: Large ribosomal subunit protein bL25 (216 aa).

The tract at residues 191–216 is disordered; the sequence is LVSAESEEDEDAPAADEVPATEVSEE. Residues 195–204 are compositionally biased toward acidic residues; that stretch reads ESEEDEDAPA.

The protein belongs to the bacterial ribosomal protein bL25 family. CTC subfamily. Part of the 50S ribosomal subunit; part of the 5S rRNA/L5/L18/L25 subcomplex. Contacts the 5S rRNA. Binds to the 5S rRNA independently of L5 and L18.

This is one of the proteins that binds to the 5S RNA in the ribosome where it forms part of the central protuberance. This Jannaschia sp. (strain CCS1) protein is Large ribosomal subunit protein bL25.